A 158-amino-acid polypeptide reads, in one-letter code: Transcription elongation factor GreA (158 aa).

It belongs to the GreA/GreB family.

Necessary for efficient RNA polymerase transcription elongation past template-encoded arresting sites. The arresting sites in DNA have the property of trapping a certain fraction of elongating RNA polymerases that pass through, resulting in locked ternary complexes. Cleavage of the nascent transcript by cleavage factors such as GreA or GreB allows the resumption of elongation from the new 3'terminus. GreA releases sequences of 2 to 3 nucleotides. This is Transcription elongation factor GreA from Polaromonas naphthalenivorans (strain CJ2).